Consider the following 292-residue polypeptide: Cyclic dipurine nucleotide synthase (292 aa).

Residue Gln47 coordinates ATP. Residue 48 to 52 coordinates GTP; sequence GSYRN. Mg(2+)-binding residues include Asp61 and Asp63. Residues Asp63, 121–122, and Asp136 contribute to the ATP site; that span reads NK. Residue Asp136 participates in Mg(2+) binding. GTP is bound by residues Lys197 and Ser216.

The protein belongs to the CD-NTase family. E01 subfamily. Requires Mg(2+) as cofactor.

It catalyses the reaction 2 ATP = 3',3'-c-di-AMP + 2 diphosphate. The enzyme catalyses 2 GTP = 3',3'-c-di-GMP + 2 diphosphate. It carries out the reaction GTP + ATP = 3',3'-cGAMP + 2 diphosphate. Functionally, cyclic nucleotide synthase (second messenger synthase) of a CBASS antivirus system. CBASS (cyclic oligonucleotide-based antiphage signaling system) provides immunity against bacteriophage. The CD-NTase protein synthesizes cyclic nucleotides in response to infection; these serve as specific second messenger signals. The signals activate a diverse range of effectors, leading to bacterial cell death and thus abortive phage infection. A type I-A(GA) CBASS system. Cyclic dinucleotide synthase that catalyzes the synthesis of 3'3'-cyclic GMP-AMP (cGAMP) from GTP and ATP, and of c-di-AMP and c-di-GMP, that are second messengers for cell signal transduction. In Elizabethkingia meningoseptica (Chryseobacterium meningosepticum), this protein is Cyclic dipurine nucleotide synthase.